The primary structure comprises 158 residues: 2-C-methyl-D-erythritol 2,4-cyclodiphosphate synthase (158 aa).

Residues Asp9 and His11 each coordinate a divalent metal cation. 4-CDP-2-C-methyl-D-erythritol 2-phosphate contacts are provided by residues 9 to 11 (DVH) and 35 to 36 (HS). His43 contacts a divalent metal cation. 4-CDP-2-C-methyl-D-erythritol 2-phosphate-binding positions include 57-59 (DIG), 62-66 (FPDTD), 133-136 (TTTE), Phe140, and Arg143.

It belongs to the IspF family. In terms of assembly, homotrimer. A divalent metal cation serves as cofactor.

The catalysed reaction is 4-CDP-2-C-methyl-D-erythritol 2-phosphate = 2-C-methyl-D-erythritol 2,4-cyclic diphosphate + CMP. It participates in isoprenoid biosynthesis; isopentenyl diphosphate biosynthesis via DXP pathway; isopentenyl diphosphate from 1-deoxy-D-xylulose 5-phosphate: step 4/6. Functionally, involved in the biosynthesis of isopentenyl diphosphate (IPP) and dimethylallyl diphosphate (DMAPP), two major building blocks of isoprenoid compounds. Catalyzes the conversion of 4-diphosphocytidyl-2-C-methyl-D-erythritol 2-phosphate (CDP-ME2P) to 2-C-methyl-D-erythritol 2,4-cyclodiphosphate (ME-CPP) with a corresponding release of cytidine 5-monophosphate (CMP). This chain is 2-C-methyl-D-erythritol 2,4-cyclodiphosphate synthase, found in Actinobacillus pleuropneumoniae serotype 5b (strain L20).